Reading from the N-terminus, the 32-residue chain is Potassium channel toxin alpha-KTx 9.4 (32 aa).

Intrachain disulfides connect cysteine 3–cysteine 19, cysteine 6–cysteine 24, and cysteine 10–cysteine 26.

Expressed by the venom gland.

Its subcellular location is the secreted. Its function is as follows. Blocker of human voltage-gated potassium channel Kv1.1/KCNA1. The chain is Potassium channel toxin alpha-KTx 9.4 from Hottentotta tamulus (Eastern Indian scorpion).